The following is a 40-amino-acid chain: Photosystem II reaction center protein J (40 aa).

Residues 8-28 (IPLWIIGTVTGIFGIGLIGIF) traverse the membrane as a helical segment.

The protein belongs to the PsbJ family. As to quaternary structure, PSII is composed of 1 copy each of membrane proteins PsbA, PsbB, PsbC, PsbD, PsbE, PsbF, PsbH, PsbI, PsbJ, PsbK, PsbL, PsbM, PsbT, PsbX, PsbY, PsbZ, Psb30/Ycf12, at least 3 peripheral proteins of the oxygen-evolving complex and a large number of cofactors. It forms dimeric complexes.

The protein localises to the plastid membrane. Functionally, one of the components of the core complex of photosystem II (PSII). PSII is a light-driven water:plastoquinone oxidoreductase that uses light energy to abstract electrons from H(2)O, generating O(2) and a proton gradient subsequently used for ATP formation. It consists of a core antenna complex that captures photons, and an electron transfer chain that converts photonic excitation into a charge separation. This is Photosystem II reaction center protein J from Cuscuta reflexa (Southern Asian dodder).